A 113-amino-acid chain; its full sequence is Ribulose bisphosphate carboxylase small subunit (113 aa).

It belongs to the RuBisCO small chain family. Heterohexadecamer of 8 large and 8 small subunits. RuBisCO interacts with the C-terminus of CcmM, and can be found in complexes that also include carbonic anhydrase (ccaA).

It localises to the carboxysome. Its function is as follows. RuBisCO catalyzes two reactions: the carboxylation of D-ribulose 1,5-bisphosphate, the primary event in carbon dioxide fixation, as well as the oxidative fragmentation of the pentose substrate in the photorespiration process. Both reactions occur simultaneously and in competition at the same active site. Although the small subunit is not catalytic it is essential for maximal activity. The sequence is that of Ribulose bisphosphate carboxylase small subunit from Synechocystis sp. (strain ATCC 27184 / PCC 6803 / Kazusa).